Consider the following 257-residue polypeptide: tRNA (guanine-N(1)-)-methyltransferase (257 aa).

Residues Gly-112 and 136–141 (LGDYVL) contribute to the S-adenosyl-L-methionine site.

The protein belongs to the RNA methyltransferase TrmD family. As to quaternary structure, homodimer.

The protein localises to the cytoplasm. It carries out the reaction guanosine(37) in tRNA + S-adenosyl-L-methionine = N(1)-methylguanosine(37) in tRNA + S-adenosyl-L-homocysteine + H(+). Functionally, specifically methylates guanosine-37 in various tRNAs. The sequence is that of tRNA (guanine-N(1)-)-methyltransferase from Salinispora arenicola (strain CNS-205).